Consider the following 360-residue polypeptide: Thiol protease SEN102 (360 aa).

An N-terminal signal peptide occupies residues 1–20; that stretch reads MAKPKFIALALVALSFLSIA. Residues 21-133 constitute a propeptide, activation peptide; the sequence is QSIPFTEKDL…ENVGSLPAAS (113 aa). Disulfide bonds link Cys151-Cys193, Cys185-Cys225, and Cys283-Cys335. Cys154 is a catalytic residue. Active-site residues include His289 and Asn310. N-linked (GlcNAc...) asparagine glycosylation is present at Asn353. A Prevents secretion from ER motif is present at residues 357–360; the sequence is RDEL.

The protein belongs to the peptidase C1 family.

The protein localises to the endoplasmic reticulum lumen. The chain is Thiol protease SEN102 (SEN102) from Hemerocallis sp. (Daylily).